Consider the following 449-residue polypeptide: Tubulin alpha-8 chain (449 aa).

An MREC motif motif is present at residues 1 to 4 (MREC). The GTP site is built by Gln11, Glu71, Ser140, Gly144, Thr145, Thr179, Asn206, and Asn228. Glu71 lines the Mg(2+) pocket. Residue Glu254 is part of the active site.

Belongs to the tubulin family. Dimer of alpha and beta chains. A typical microtubule is a hollow water-filled tube with an outer diameter of 25 nm and an inner diameter of 15 nM. Alpha-beta heterodimers associate head-to-tail to form protofilaments running lengthwise along the microtubule wall with the beta-tubulin subunit facing the microtubule plus end conferring a structural polarity. Microtubules usually have 13 protofilaments but different protofilament numbers can be found in some organisms and specialized cells. Requires Mg(2+) as cofactor. In terms of processing, some glutamate residues at the C-terminus are polyglycylated, resulting in polyglycine chains on the gamma-carboxyl group. Glycylation is mainly limited to tubulin incorporated into axonemes (cilia and flagella) whereas glutamylation is prevalent in neuronal cells, centrioles, axonemes, and the mitotic spindle. Both modifications can coexist on the same protein on adjacent residues, and lowering polyglycylation levels increases polyglutamylation, and reciprocally. Cilia and flagella glycylation is required for their stability and maintenance. Flagella glycylation controls sperm motility. Some glutamate residues at the C-terminus are polyglutamylated, resulting in polyglutamate chains on the gamma-carboxyl group. Polyglutamylation plays a key role in microtubule severing by spastin (SPAST). SPAST preferentially recognizes and acts on microtubules decorated with short polyglutamate tails: severing activity by SPAST increases as the number of glutamates per tubulin rises from one to eight, but decreases beyond this glutamylation threshold. Glutamylation is also involved in cilia motility. Post-translationally, the C-terminal phenylalanine residue is cleaved by MATCAP1/KIAA0895L.

The protein resides in the cytoplasm. It is found in the cytoskeleton. It carries out the reaction GTP + H2O = GDP + phosphate + H(+). Functionally, tubulin is the major constituent of microtubules, a cylinder consisting of laterally associated linear protofilaments composed of alpha- and beta-tubulin heterodimers. Microtubules grow by the addition of GTP-tubulin dimers to the microtubule end, where a stabilizing cap forms. Below the cap, tubulin dimers are in GDP-bound state, owing to GTPase activity of alpha-tubulin. The chain is Tubulin alpha-8 chain (TUBA8) from Bos taurus (Bovine).